The sequence spans 404 residues: 11-beta-hydroxysteroid dehydrogenase type 2 (404 aa).

82-111 (TRAVLITGCDSGFGNATAKKLDTMGFTVLA) lines the NAD(+) pocket. Position 219 (S219) interacts with substrate. Y232 serves as the catalytic Proton acceptor. The interval 383–404 (LTSARDIAQDQGPRPDPSPTAQ) is disordered.

It belongs to the short-chain dehydrogenases/reductases (SDR) family. Interacts with ligand-free cytoplasmic NR3C2. As to expression, highly expressed in kidney, adrenal and colon; detected at lower levels on lung, liver, and spleen. Expressed in oocytes. Expressed in uterine tissues and in corpora lutea.

The protein resides in the microsome. It localises to the endoplasmic reticulum. It carries out the reaction an 11beta-hydroxysteroid + NAD(+) = an 11-oxosteroid + NADH + H(+). The catalysed reaction is corticosterone + NAD(+) = 11-dehydrocorticosterone + NADH + H(+). The enzyme catalyses cortisol + NAD(+) = cortisone + NADH + H(+). It catalyses the reaction 11beta,17beta-dihydroxyandrost-4-ene-3-one + NAD(+) = 17beta-hydroxyandrost-4-ene-3,11-dione + NADH + H(+). It carries out the reaction 11beta-hydroxyandrost-4-ene-3,17-dione + NAD(+) = androst-4-ene-3,11,17-trione + NADH + H(+). Its pathway is steroid metabolism. With respect to regulation, inhibited by glycyrrhetinic acid, carbenoloxone, 11-alpha-OH-progesterone and 11-beta-OH-progesterone. Functionally, catalyzes the conversion of biologically active 11beta-hydroxyglucocorticoids (11beta-hydroxysteroid) such as cortisol, to inactive 11-ketoglucocorticoids (11-oxosteroid) such as cortisone, in the presence of NAD(+). Functions as a dehydrogenase (oxidase), thereby decreasing the concentration of active glucocorticoids, thus protecting the nonselective mineralocorticoid receptor from occupation by glucocorticoids. Affinity towards corticosterone is higher than cortisol or dexamethasone. Plays an important role in maintaining glucocorticoids balance during preimplantation and protects the fetus from excessive maternal corticosterone exposure. Catalyzes the oxidation of 11beta-hydroxytestosterone (11beta,17beta-dihydroxyandrost-4-ene-3-one) to 11-ketotestosterone (17beta-hydroxyandrost-4-ene-3,11-dione), a major bioactive androgen. Catalyzes the conversion of 11beta-hydroxyandrostenedione (11beta-hydroxyandrost-4-ene-3,17-dione) to 11-ketoandrostenedione (androst-4-ene-3,11,17-trione), which can be further metabolized to 11-ketotestosterone. Converts 7-beta-25-dihydroxycholesterol to 7-oxo-25-hydroxycholesterol in vitro. 7-beta-25-dihydroxycholesterol (not 7-oxo-25-hydroxycholesterol) acts as ligand for the G-protein-coupled receptor (GPCR) Epstein-Barr virus-induced gene 2 (EBI2) and may thereby regulate immune cell migration. May protect ovulating oocytes and fertilizing spermatozoa from the adverse effects of cortisol. The protein is 11-beta-hydroxysteroid dehydrogenase type 2 (HSD11B2) of Bos taurus (Bovine).